We begin with the raw amino-acid sequence, 210 residues long: Menaquinone reductase, multiheme cytochrome c subunit (210 aa).

The chain crosses the membrane as a helical span at residues 20–40; it reads GGAAPFFVGLVVALVFGWWAF. Heme contacts are provided by C67, C70, H71, C88, C91, H92, C140, C143, H144, C152, C155, H156, C186, C189, H190, C205, C208, and H209.

The protein belongs to the multiheme cytochrome c family. The Qrc complex is composed of four subunits: QrcA, QrcB, QrcC and QrcD. Can form a supercomplex with the [NiFe] hydrogenase HynA1 and the tetraheme Type I cytochrome c3 TpIc(3), its physiological electron donors. Requires heme c as cofactor.

The protein resides in the cell inner membrane. In terms of biological role, component of the respiratory Qrc complex, that catalyzes the reduction of the menaquinone pool using electrons transferred from the reduced periplasmic cytochrome c3, and which is probably involved in sulfate respiration. Is likely essential for growth on H(2) or formate since the periplasmic hydrogenases and/or formate dehydrogenases act as primary electron donors for the Qrc complex. In Nitratidesulfovibrio vulgaris (strain ATCC 29579 / DSM 644 / CCUG 34227 / NCIMB 8303 / VKM B-1760 / Hildenborough) (Desulfovibrio vulgaris), this protein is Menaquinone reductase, multiheme cytochrome c subunit.